The sequence spans 216 residues: Adenylate kinase (216 aa).

An ATP-binding site is contributed by G10–T15. The interval S30–V59 is NMP. Residues T31, R36, A57–V59, G85–R88, and Q92 each bind AMP. The LID stretch occupies residues G126–D163. R127 lines the ATP pocket. Zn(2+) is bound by residues C130 and C133. T136–Y137 contacts ATP. The Zn(2+) site is built by C150 and C153. AMP is bound by residues R160 and R171. Q199 contacts ATP.

This sequence belongs to the adenylate kinase family. In terms of assembly, monomer.

The protein localises to the cytoplasm. It catalyses the reaction AMP + ATP = 2 ADP. It participates in purine metabolism; AMP biosynthesis via salvage pathway; AMP from ADP: step 1/1. Functionally, catalyzes the reversible transfer of the terminal phosphate group between ATP and AMP. Plays an important role in cellular energy homeostasis and in adenine nucleotide metabolism. This chain is Adenylate kinase, found in Bacillus cereus (strain B4264).